The following is a 108-amino-acid chain: UPF0060 membrane protein CKO_01576 (108 aa).

4 helical membrane passes run 6 to 26 (LLFF…WLWL), 29 to 49 (GATA…VWLL), 61 to 81 (AAYG…VDGV), and 85 to 105 (LYDW…VAGW).

This sequence belongs to the UPF0060 family.

It is found in the cell inner membrane. This Citrobacter koseri (strain ATCC BAA-895 / CDC 4225-83 / SGSC4696) protein is UPF0060 membrane protein CKO_01576.